We begin with the raw amino-acid sequence, 166 residues long: Transcription antitermination protein NusB (166 aa).

Basic and acidic residues predominate over residues 1–18 (MISDESDRFNPRDPKPAD). The segment at 1-30 (MISDESDRFNPRDPKPADAGKPSKSAKRRE) is disordered.

Belongs to the NusB family.

Functionally, involved in transcription antitermination. Required for transcription of ribosomal RNA (rRNA) genes. Binds specifically to the boxA antiterminator sequence of the ribosomal RNA (rrn) operons. This is Transcription antitermination protein NusB from Pseudomonas fluorescens (strain Pf0-1).